A 1953-amino-acid chain; its full sequence is tRNA (32-2'-O)-methyltransferase regulator THADA (1953 aa).

A coiled-coil region spans residues 886 to 918 (ERNTLMVIKCLMENLEEEVSQAENSLLQAAAAF). Residues serine 1015, serine 1024, and serine 1161 each carry the phosphoserine modification.

It belongs to the THADA family. Expressed in pancreas, adrenal medulla, thyroid, adrenal cortex, testis, thymus, small intestine and stomach.

In terms of biological role, together with methyltransferase FTSJ1, methylates the 2'-O-ribose of nucleotides at position 32 of the anticodon loop of substrate tRNAs. This is tRNA (32-2'-O)-methyltransferase regulator THADA (THADA) from Homo sapiens (Human).